Reading from the N-terminus, the 291-residue chain is Acidic endochitinase (291 aa).

Positions 1–22 (MIKYSFLLTALVLFLRALKLEA) are cleaved as a signal peptide. In terms of domain architecture, GH18 spans 23-291 (GDIVIYWGQN…GYSSAIKANV (269 aa)). Cystine bridges form between C42-C89 and C72-C79. The Proton donor role is filled by E149. A disulfide bridge connects residues C180 and C209.

It belongs to the glycosyl hydrolase 18 family. Chitinase class II subfamily.

It is found in the secreted. Its subcellular location is the cell wall. The catalysed reaction is Random endo-hydrolysis of N-acetyl-beta-D-glucosaminide (1-&gt;4)-beta-linkages in chitin and chitodextrins.. In terms of biological role, this protein functions as a defense against chitin containing fungal pathogens. The protein is Acidic endochitinase of Nicotiana tabacum (Common tobacco).